Reading from the N-terminus, the 384-residue chain is Spermidine/putrescine import ATP-binding protein PotA (384 aa).

The region spanning 6-238 (ITFNNVSKTF…PINHFVANFI (233 aa)) is the ABC transporter domain. An ATP-binding site is contributed by 40-47 (GASGSGKS).

It belongs to the ABC transporter superfamily. Spermidine/putrescine importer (TC 3.A.1.11.1) family. In terms of assembly, the complex is composed of two ATP-binding proteins (PotA), two transmembrane proteins (PotB and PotC) and a solute-binding protein (PotD).

Its subcellular location is the cell membrane. It carries out the reaction ATP + H2O + polyamine-[polyamine-binding protein]Side 1 = ADP + phosphate + polyamineSide 2 + [polyamine-binding protein]Side 1.. Functionally, part of the ABC transporter complex PotABCD involved in spermidine/putrescine import. Responsible for energy coupling to the transport system. The polypeptide is Spermidine/putrescine import ATP-binding protein PotA (Streptococcus pyogenes serotype M12 (strain MGAS2096)).